We begin with the raw amino-acid sequence, 427 residues long: Serine--tRNA ligase (427 aa).

Residue 231–233 (TAE) coordinates L-serine. 262–264 (RSE) contacts ATP. L-serine is bound at residue Glu-285. Position 349-352 (349-352 (EISS)) interacts with ATP. Residue Ser-385 coordinates L-serine.

It belongs to the class-II aminoacyl-tRNA synthetase family. Type-1 seryl-tRNA synthetase subfamily. Homodimer. The tRNA molecule binds across the dimer.

Its subcellular location is the cytoplasm. The catalysed reaction is tRNA(Ser) + L-serine + ATP = L-seryl-tRNA(Ser) + AMP + diphosphate + H(+). It catalyses the reaction tRNA(Sec) + L-serine + ATP = L-seryl-tRNA(Sec) + AMP + diphosphate + H(+). Its pathway is aminoacyl-tRNA biosynthesis; selenocysteinyl-tRNA(Sec) biosynthesis; L-seryl-tRNA(Sec) from L-serine and tRNA(Sec): step 1/1. Its function is as follows. Catalyzes the attachment of serine to tRNA(Ser). Is also able to aminoacylate tRNA(Sec) with serine, to form the misacylated tRNA L-seryl-tRNA(Sec), which will be further converted into selenocysteinyl-tRNA(Sec). The chain is Serine--tRNA ligase from Rhizobium etli (strain CIAT 652).